Reading from the N-terminus, the 815-residue chain is Cell division control protein 53 (815 aa).

The tract at residues 9-280 is required for interaction with SKP1/CBF3D and F-box protein; the sequence is DDLEATWNFI…WDDHTKKPLS (272 aa). Residues 448–748 are required for interaction with CDC34/UBC3; it reads KKATKPEVAS…IEKELNTERQ (301 aa). The Cullin neddylation domain occupies 746-807; the sequence is ERQIFLEACI…QKGYLQRGDD (62 aa). A Glycyl lysine isopeptide (Lys-Gly) (interchain with G-Cter in NEDD8) cross-link involves residue Lys-760.

Belongs to the cullin family. Component of multiple SCF (SKP1-CUL1-F-box) E3 ubiquitin-protein ligase complexes formed of CUL1, SKP1/HRT1, RBX1 and a variable F-box domain-containing protein as substrate-specific adapter. Component of the SCF(CDC4) complex containing CDC4. Component of the SCF(MET30) complex containing MET30. Component of the SCF(GRR1) complex containing GRR1. Component of the probable SCF(DIA2) complex containing DIA2. Component of the probable SCF(YDR131C) complex containing YDR131C. Component of the probable SCF(YDR306C) complex containing YDR306C. Component of the probable SCF(YLR224W) complex containing YLR224W. Component of the probable SCF(YJL149W) complex containing YJL149W. Component of the probable SCF(YNL311C) complex containing YNL311C. Component of the probable SCF(MDM30) complex containing MDM30. Component of the probable SCF(UFO1) complex containing UFO1. Component of the probable SCF(HRT3) complex containing HRT3. Component of the probable SCF(YBR280C) complex containing YBR280C. Component of the probable SCF(YBR352W) complex containing YBR352W. Interacts with DCN1, YBR280C, YLR224W and YLR352W. The unneddylated form interacts with LAG2/CAND1 and the interaction mediates the exchange of the F-box substrate-specific subunit. In terms of processing, neddylated; enhancing the ubiquitin-ligase activity.

It localises to the cytoplasm. Its subcellular location is the nucleus. Functionally, core component of multiple cullin-RING-based SCF (SKP1-CUL1-F-box) E3 ubiquitin-protein ligase complexes which mediate the ubiquitination and subsequent proteasomal degradation of target proteins. As a scaffold protein may contribute to catalysis through positioning of the substrate and the ubiquitin-conjugating enzyme. The SCF complex associates with CDC34 as the E2 ubiquitin-conjugating enzyme. The functional specificity of the SCF complex depends on the type of F-box protein. SCF(CDC4) controls the G1-to-S phase transition; it directs ubiquitination of the phosphorylated CDK inhibitor SIC1 and of CDC6. SCF(CDC4) directs ubiquitination of GCN4. SCF(GRR1) directs ubiquitination of phosphorylated CLN1, CLN2 and GIC2. SCF(MET30) directs ubiquitination of MET4. SCF(DIA2) is specifically involved in the pheromone induced degradation of phosphorylated TEC1. SCF(MDM30) seems to direct ubiquitination of FZ01. Involved in the regulation of methionine biosynthesis genes. The protein is Cell division control protein 53 (CDC53) of Saccharomyces cerevisiae (strain ATCC 204508 / S288c) (Baker's yeast).